Here is a 414-residue protein sequence, read N- to C-terminus: uncharacterized protein (414 aa).

The Lumenal segment spans residues M1–K66. A disordered region spans residues S20–D51. Polar residues predominate over residues D25–D51. A Glycyl lysine isopeptide (Lys-Gly) (interchain with G-Cter in ubiquitin) cross-link involves residue K40. A helical membrane pass occupies residues P67–S87. In terms of domain architecture, EamA 1 spans Y78–R215. At T88 to P106 the chain is on the cytoplasmic side. Residues L107–I127 form a helical membrane-spanning segment. The Lumenal segment spans residues N128–K144. The chain crosses the membrane as a helical span at residues W145 to L167. The Cytoplasmic segment spans residues T168–D171. A helical transmembrane segment spans residues A172–L191. The Lumenal portion of the chain corresponds to R192–E199. The helical transmembrane segment at A200 to F220 threads the bilayer. At G221 to R241 the chain is on the cytoplasmic side. Residues L242 to I262 traverse the membrane as a helical segment. One can recognise an EamA 2 domain in the interval L253–R379. The Lumenal portion of the chain corresponds to R263–A269. The chain crosses the membrane as a helical span at residues H270–I290. The Cytoplasmic segment spans residues N291–W307. Residues I308–I328 form a helical membrane-spanning segment. Over Q329–H357 the chain is Lumenal. The chain crosses the membrane as a helical span at residues W358 to I378. The Cytoplasmic portion of the chain corresponds to R379–K414.

This sequence to yeast YPL264c.

The protein localises to the membrane. This is an uncharacterized protein from Saccharomyces cerevisiae (strain ATCC 204508 / S288c) (Baker's yeast).